The primary structure comprises 315 residues: Zinc transport protein ZntB (315 aa).

Residues 1 to 250 (MGFMIEHWDF…RDEKTNKNSY (250 aa)) lie on the Cytoplasmic side of the membrane. The helical transmembrane segment at 251–271 (LFTLVATIFLPTSFLTGLLGI) threads the bilayer. The Periplasmic segment spans residues 272-282 (NIGGMPGVESS). Residues 283–303 (MAFTWFCIALIVIFGLEWLLF) traverse the membrane as a helical segment. Topologically, residues 304-315 (KRLGFTNKTDDE) are cytoplasmic.

The protein belongs to the CorA metal ion transporter (MIT) (TC 1.A.35) family. As to quaternary structure, homopentamer. Can assemble pentamers in the absence of the transmembrane regions.

Its subcellular location is the cell inner membrane. It carries out the reaction Zn(2+)(out) + H(+)(out) = Zn(2+)(in) + H(+)(in). In terms of biological role, zinc transporter. Acts as a Zn(2+):proton symporter, which likely mediates zinc ion uptake. The sequence is that of Zinc transport protein ZntB from Vibrio parahaemolyticus serotype O3:K6 (strain RIMD 2210633).